A 422-amino-acid polypeptide reads, in one-letter code: Probable metallocarboxypeptidase A (422 aa).

Residues 1 to 17 (MRSVLSLALLAVNVVTA) form the signal peptide. A propeptide spans 18-112 (AVVAPFDYSG…FEAYSAGYAP (95 aa)) (activation peptide). Residues 119–419 (SYHSYQDHLS…AGTVAMLKAV (301 aa)) form the Peptidase M14 domain. Zn(2+)-binding residues include His-179 and Glu-182. Residues 179–182 (HARE), Arg-237, and 254–255 (NR) contribute to the substrate site. Residues Cys-248 and Cys-271 are joined by a disulfide bond. Residue His-309 coordinates Zn(2+). 310-311 (SY) serves as a coordination point for substrate. The active-site Proton donor/acceptor is Glu-385.

It belongs to the peptidase M14 family. Zn(2+) is required as a cofactor.

The protein localises to the secreted. Extracellular metalloprotease that contributes to pathogenicity. The polypeptide is Probable metallocarboxypeptidase A (MCPA) (Trichophyton verrucosum (strain HKI 0517)).